Here is a 361-residue protein sequence, read N- to C-terminus: MCETASTTLPPGITPISGDEARRLIHHTSGPELEALLDRAEAVRRAVHGDEVALCGITNAKSGRCPEDCGFCSQSARFEGADAPVYPMIGAGEIVEQAHKAERAGAREFSIVASGTRLAREQELATVEEALRRLRAETAVEPCASLGLMREPELRRLKDAGLMHYHHNLETARSHFENVCTTHTFDEQLETIRAAKGLGLKLCSGGILGMGETPEQRVEFAEEVRDLGVDCVPVNFLNPRAGTPLAHLKAITPEECLAALAVFRLMMPAAHIFVMGGREVNLGDRQDLIFRAGANGTMVGNYLTSAGRAPDLTVGMVERQGLTLRPPDTGKPWAFDGHAPSDADWNRKAAEPRPRPLPVVR.

Residues 47–278 (VHGDEVALCG…AAHIFVMGGR (232 aa)) enclose the Radical SAM core domain. The [4Fe-4S] cluster site is built by C65, C69, and C72. [2Fe-2S] cluster is bound by residues S110, C143, and C203. The segment at 323–361 (TLRPPDTGKPWAFDGHAPSDADWNRKAAEPRPRPLPVVR) is disordered. Residues 339–354 (APSDADWNRKAAEPRP) show a composition bias toward basic and acidic residues.

The protein belongs to the radical SAM superfamily. Biotin synthase family. In terms of assembly, homodimer. Requires [4Fe-4S] cluster as cofactor. [2Fe-2S] cluster is required as a cofactor.

It carries out the reaction (4R,5S)-dethiobiotin + (sulfur carrier)-SH + 2 reduced [2Fe-2S]-[ferredoxin] + 2 S-adenosyl-L-methionine = (sulfur carrier)-H + biotin + 2 5'-deoxyadenosine + 2 L-methionine + 2 oxidized [2Fe-2S]-[ferredoxin]. It functions in the pathway cofactor biosynthesis; biotin biosynthesis; biotin from 7,8-diaminononanoate: step 2/2. Functionally, catalyzes the conversion of dethiobiotin (DTB) to biotin by the insertion of a sulfur atom into dethiobiotin via a radical-based mechanism. This is Biotin synthase from Anaeromyxobacter sp. (strain K).